Reading from the N-terminus, the 65-residue chain is Large ribosomal subunit protein bL35 (65 aa).

Positions 1-25 (MPKLKTKSSAAKRFKKTGKGGFKHR) are disordered.

The protein belongs to the bacterial ribosomal protein bL35 family.

The protein is Large ribosomal subunit protein bL35 of Francisella tularensis subsp. holarctica (strain FTNF002-00 / FTA).